Reading from the N-terminus, the 487-residue chain is Histamine H1 receptor (487 aa).

Residues 1-29 are Extracellular-facing; that stretch reads MSLPNSSCLLEDKMCEGNKTTMASPQLMP. 2 N-linked (GlcNAc...) asparagine glycosylation sites follow: Asn-5 and Asn-18. A helical transmembrane segment spans residues 30–50; it reads LVVVLSTISLVTVGLNLLVLY. The Cytoplasmic segment spans residues 51–64; that stretch reads AVRSERKLHTVGNL. Residues 65-89 form a helical membrane-spanning segment; that stretch reads YIVSLSVADLIVGAVVMPMNILYLL. The Extracellular segment spans residues 90 to 97; the sequence is MSKWSLGR. The helical transmembrane segment at 98-123 threads the bilayer; that stretch reads PLCLFWLSMDYVASTASIFSVFILCI. Cys-100 and Cys-180 form a disulfide bridge. Positions 107 and 112 each coordinate histamine. Positions 107–112 are important for agonist binding; that stretch reads DYVAST. The Cytoplasmic segment spans residues 124-144; sequence DRYRSVQQPLRYLKYRTKTRA. Thr-140 and Thr-142 each carry phosphothreonine. The helical transmembrane segment at 145–164 threads the bilayer; the sequence is SATILGAWFLSFLWVIPILG. Over 165–188 the chain is Extracellular; that stretch reads WNHFRQQISVRREDKCETDFYDVT. The chain crosses the membrane as a helical span at residues 189 to 211; the sequence is WFKVMTAIINFYLPTLLMLWFYA. Asn-198 lines the histamine pocket. Residues 212-416 lie on the Cytoplasmic side of the membrane; the sequence is KIYKAVQKHC…MNRERKAAKQ (205 aa). Ser-230 is subject to Phosphoserine. Residues 238 to 261 show a composition bias toward basic and acidic residues; it reads KLRPENPKGDAKKPGKESPWEVLK. The segment at 238-286 is disordered; that stretch reads KLRPENPKGDAKKPGKESPWEVLKRKPKDAGGGSVLKSPSQTPKEMKSP. Thr-279 bears the Phosphothreonine mark. A phosphoserine mark is found at Ser-344 and Ser-347. A disordered region spans residues 345 to 379; it reads EISEDQMLGDSQSFSRTDSDTTTETAPGKGKLRSG. Residues 353–369 are compositionally biased toward polar residues; sequence GDSQSFSRTDSDTTTET. Phosphoserine occurs at positions 380, 396, and 398. Residues 417–440 traverse the membrane as a helical segment; it reads LGFIMAAFILCWIPYFIFFMVIAF. The interval 424 to 428 is important for agonist binding; it reads FILCW. Residue Tyr-431 coordinates histamine. A disulfide bridge connects residues Cys-441 and Cys-444. Topologically, residues 441 to 446 are extracellular; that stretch reads CKNCCN. The chain crosses the membrane as a helical span at residues 447–469; sequence EHLHMFTIWLGYINSTLNPLIYP. The Cytoplasmic segment spans residues 470–487; the sequence is LCNENFKKTFKRILHIRS.

This sequence belongs to the G-protein coupled receptor 1 family. Phosphorylation at sites in the second and third cytoplasmic loops independently contribute to agonist-induced receptor down-regulation.

The protein localises to the cell membrane. Functionally, G-protein-coupled receptor for histamine, a biogenic amine that functions as an immune modulator and a neurotransmitter. Through the H1 receptor, histamine mediates the contraction of smooth muscles and increases capillary permeability due to contraction of terminal venules. Also mediates neurotransmission in the central nervous system and thereby regulates circadian rhythms, emotional and locomotor activities as well as cognitive functions. The sequence is that of Histamine H1 receptor from Pongo pygmaeus (Bornean orangutan).